Here is a 98-residue protein sequence, read N- to C-terminus: Putative transcriptional regulator YdaS (98 aa).

When overexpressed, it induces Rac prophage excision, possibly to counteract the lethal toxicity of YdaT. Overexpression of ydaS or ydaST reduces growth and leads to loss of cell viability. May contribute to toxicity and morphological defects. The sequence is that of Putative transcriptional regulator YdaS (ydaS) from Escherichia coli (strain K12).